The following is a 156-amino-acid chain: Jun dimerization protein 2 (156 aa).

Positions 56 to 95 (KRPFDAIKSEDDDDDERKKRRREKNKVAAARCRNRKKERT) are disordered. The bZIP domain occupies 70-133 (DERKKRRREK…QQLIVMLNLH (64 aa)). A basic motif region spans residues 72–94 (RKKRRREKNKVAAARCRNRKKER). Residues 98-126 (LQKESERLEMLNSDLKSQIEELKSERQQL) are leucine-zipper.

This sequence belongs to the bZIP family. ATF subfamily.

It is found in the nucleus. Its function is as follows. Component of the AP-1 transcription factor that represses transactivation mediated by the Jun family of proteins. This chain is Jun dimerization protein 2 (jdp2), found in Danio rerio (Zebrafish).